The following is a 216-amino-acid chain: Somatotropin (216 aa).

A signal peptide spans 1 to 25 (MAPGSWFSPLLIAVVTLGLPQGAAA). His-45 contributes to the Zn(2+) binding site. An intrachain disulfide couples Cys-78 to Cys-189. Residue Glu-198 participates in Zn(2+) binding. Cys-206 and Cys-214 are oxidised to a cystine.

The protein belongs to the somatotropin/prolactin family. Pituitary gland.

It localises to the secreted. In terms of biological role, growth hormone plays an important role in growth control. The polypeptide is Somatotropin (GH) (Meleagris gallopavo (Wild turkey)).